We begin with the raw amino-acid sequence, 150 residues long: Large ribosomal subunit protein bL17 (150 aa).

Residues 126–150 (DRAKRREERLKAQREGRDHEEETDE) are disordered.

The protein belongs to the bacterial ribosomal protein bL17 family. In terms of assembly, part of the 50S ribosomal subunit. Contacts protein L32.

The polypeptide is Large ribosomal subunit protein bL17 (Solibacter usitatus (strain Ellin6076)).